The primary structure comprises 477 residues: Methylenetetrahydrofolate--tRNA-(uracil-5-)-methyltransferase TrmFO (477 aa).

Residue 14–19 (GGGLAG) coordinates FAD.

This sequence belongs to the MnmG family. TrmFO subfamily. FAD serves as cofactor.

The protein resides in the cytoplasm. It carries out the reaction uridine(54) in tRNA + (6R)-5,10-methylene-5,6,7,8-tetrahydrofolate + NADH + H(+) = 5-methyluridine(54) in tRNA + (6S)-5,6,7,8-tetrahydrofolate + NAD(+). The enzyme catalyses uridine(54) in tRNA + (6R)-5,10-methylene-5,6,7,8-tetrahydrofolate + NADPH + H(+) = 5-methyluridine(54) in tRNA + (6S)-5,6,7,8-tetrahydrofolate + NADP(+). Catalyzes the folate-dependent formation of 5-methyl-uridine at position 54 (M-5-U54) in all tRNAs. This chain is Methylenetetrahydrofolate--tRNA-(uracil-5-)-methyltransferase TrmFO, found in Rhizobium johnstonii (strain DSM 114642 / LMG 32736 / 3841) (Rhizobium leguminosarum bv. viciae).